We begin with the raw amino-acid sequence, 220 residues long: uncharacterized protein (220 aa).

Residues 10–30 (FFIIGGVILSIGLILFFLLGF) form a helical membrane-spanning segment.

The protein resides in the membrane. This is an uncharacterized protein from Methanocaldococcus jannaschii (strain ATCC 43067 / DSM 2661 / JAL-1 / JCM 10045 / NBRC 100440) (Methanococcus jannaschii).